Consider the following 1993-residue polypeptide: Otoferlin (1993 aa).

Positions 1-98 (MALIVHLKTV…VEENRVEVSD (98 aa)) constitute a C2 1 domain. The Cytoplasmic portion of the chain corresponds to 1 to 1959 (MALIVHLKTV…IKYLICTRYK (1959 aa)). The segment at 127 to 212 (PWDDGDFLGD…KEEPQRQDEP (86 aa)) is disordered. A compositionally biased stretch (acidic residues) spans 129–145 (DDGDFLGDESLQEEEKD). Composition is skewed to basic and acidic residues over residues 163 to 186 (PGEK…EHKA) and 202 to 211 (HKEEPQRQDE). C2 domains lie at 251–372 (KRSK…HKWA) and 415–546 (IEGN…FLPT). The segment at 654–708 (NYGNEVDGTSRPQRPRPRKEPGDEEEVDLIQNSSDDEGDEAGDLASVSSTPPMRP) is disordered. Acidic residues predominate over residues 675 to 695 (GDEEEVDLIQNSSDDEGDEAG). A coiled-coil region spans residues 807–836 (RERLKSCMRELESMGQQAKSLRAQVKRHTV). 2 consecutive C2 domains span residues 959-1084 (LHSF…PPRF) and 1131-1257 (RGPI…ANWN). Ca(2+) contacts are provided by Asp991, Asp997, Asp1053, Asp1055, and Asp1061. 2 disordered regions span residues 1294–1318 (AEDE…EEPD) and 1339–1398 (LRQH…EKKK). Positions 1348–1357 (DLEEKEEMDS) are enriched in acidic residues. Residues 1366-1379 (KNKEKSRAAKEEKK) show a composition bias toward basic and acidic residues. C2 domains follow at residues 1460 to 1589 (LPED…ATCG) and 1710 to 1861 (DMPA…KQCT). Ca(2+)-binding residues include Asp1504, Asp1510, Asp1559, Asp1561, Asp1567, Asp1832, Ser1835, and Asp1838. Residues 1960-1980 (WLIIKIVLALLGLLMLALFLY) traverse the membrane as a helical segment. At 1981 to 1993 (SLPGYMVKKLLGA) the chain is on the extracellular side.

Belongs to the ferlin family. Interacts with SNAP25; the interaction is direct. Interacts with STX1; the interaction is direct. Interacts with RAB8B. It depends on Ca(2+) as a cofactor. Isoform 1 is expressed in the cochlea and brain. Expressed in cerebellum (Purkinje cells), hippocampus (granule cells of the dentate gyrus and in pyramidal cells of the CA1-CA3 region) and cortex (stellate and pyramidal cells). Expressed in hair cells of vestibular organs such as the saccule, utricle and crista ampullari. Expressed in the cochlear inner and outer cells (IHCs and OHCs) (at protein level). Expressed in brain: brainstem, cerebellum (granules cells and Purkinje cell layer), cortex (layers IV and V), inferior colliculus, superior colliculus and hippocampus (granule cells of the dentate gyrus and in pyramidal cells of the CA1-CA3 region).

The protein localises to the cytoplasmic vesicle. Its subcellular location is the secretory vesicle. It localises to the synaptic vesicle membrane. The protein resides in the basolateral cell membrane. It is found in the endoplasmic reticulum membrane. The protein localises to the golgi apparatus membrane. Its subcellular location is the presynaptic cell membrane. It localises to the cell membrane. Its function is as follows. Key calcium ion sensor involved in the Ca(2+)-triggered synaptic vesicle-plasma membrane fusion and in the control of neurotransmitter release at these output synapses. Interacts in a calcium-dependent manner to the presynaptic SNARE proteins at ribbon synapses of cochlear inner hair cells (IHCs) to trigger exocytosis of neurotransmitter. Also essential to synaptic exocytosis in immature outer hair cells (OHCs). May also play a role within the recycling of endosomes. In Rattus norvegicus (Rat), this protein is Otoferlin (Otof).